Reading from the N-terminus, the 243-residue chain is Pyridoxine 5'-phosphate synthase (243 aa).

N9 serves as a coordination point for 3-amino-2-oxopropyl phosphate. Position 11-12 (11-12 (DH)) interacts with 1-deoxy-D-xylulose 5-phosphate. Position 20 (R20) interacts with 3-amino-2-oxopropyl phosphate. H45 functions as the Proton acceptor in the catalytic mechanism. 1-deoxy-D-xylulose 5-phosphate-binding residues include R47 and H52. Residue E72 is the Proton acceptor of the active site. T102 lines the 1-deoxy-D-xylulose 5-phosphate pocket. The Proton donor role is filled by H193. 3-amino-2-oxopropyl phosphate contacts are provided by residues G194 and 215 to 216 (GH).

The protein belongs to the PNP synthase family. Homooctamer; tetramer of dimers.

The protein resides in the cytoplasm. It catalyses the reaction 3-amino-2-oxopropyl phosphate + 1-deoxy-D-xylulose 5-phosphate = pyridoxine 5'-phosphate + phosphate + 2 H2O + H(+). It participates in cofactor biosynthesis; pyridoxine 5'-phosphate biosynthesis; pyridoxine 5'-phosphate from D-erythrose 4-phosphate: step 5/5. Functionally, catalyzes the complicated ring closure reaction between the two acyclic compounds 1-deoxy-D-xylulose-5-phosphate (DXP) and 3-amino-2-oxopropyl phosphate (1-amino-acetone-3-phosphate or AAP) to form pyridoxine 5'-phosphate (PNP) and inorganic phosphate. The protein is Pyridoxine 5'-phosphate synthase of Vibrio vulnificus (strain CMCP6).